A 349-amino-acid chain; its full sequence is Anthranilate phosphoribosyltransferase (349 aa).

Residues Gly-81, 84 to 85 (GD), Thr-89, 91 to 94 (NVST), 109 to 117 (KHGNRAASS), and Ala-121 each bind 5-phospho-alpha-D-ribose 1-diphosphate. Residue Gly-81 coordinates anthranilate. Ser-93 provides a ligand contact to Mg(2+). Position 112 (Asn-112) interacts with anthranilate. Arg-167 serves as a coordination point for anthranilate. Asp-226 and Glu-227 together coordinate Mg(2+).

It belongs to the anthranilate phosphoribosyltransferase family. Homodimer. The cofactor is Mg(2+).

It carries out the reaction N-(5-phospho-beta-D-ribosyl)anthranilate + diphosphate = 5-phospho-alpha-D-ribose 1-diphosphate + anthranilate. Its pathway is amino-acid biosynthesis; L-tryptophan biosynthesis; L-tryptophan from chorismate: step 2/5. Functionally, catalyzes the transfer of the phosphoribosyl group of 5-phosphorylribose-1-pyrophosphate (PRPP) to anthranilate to yield N-(5'-phosphoribosyl)-anthranilate (PRA). This Methylocella silvestris (strain DSM 15510 / CIP 108128 / LMG 27833 / NCIMB 13906 / BL2) protein is Anthranilate phosphoribosyltransferase.